Here is a 382-residue protein sequence, read N- to C-terminus: tRNA (guanine-N(7)-)-methyltransferase non-catalytic subunit wuho (382 aa).

The tract at residues 40-59 is disordered; sequence VKDTDAGNEPNGNQTQPTPA. Polar residues predominate over residues 49-59; that stretch reads PNGNQTQPTPA. WD repeat units follow at residues 149–190 and 192–230; these read GHMS…ECFC and GHTE…ELSK.

It belongs to the WD repeat TRM82 family. In terms of assembly, forms a heterodimer with the catalytic subunit.

It localises to the nucleus. Its pathway is tRNA modification; N(7)-methylguanine-tRNA biosynthesis. Functionally, required for the formation of N(7)-methylguanine at position 46 (m7G46) in tRNA. In the complex, it is required to stabilize and induce conformational changes of the catalytic subunit. This Anopheles gambiae (African malaria mosquito) protein is tRNA (guanine-N(7)-)-methyltransferase non-catalytic subunit wuho.